Consider the following 381-residue polypeptide: Protein-glutamate methylesterase/protein-glutamine glutaminase (381 aa).

The region spanning 20–138 (RVMVVDDSVV…EIAAADIFKH (119 aa)) is the Response regulatory domain. Position 71 is a 4-aspartylphosphate (Asp-71). The interval 154–176 (PAALASAREPEPRPIQATPVPAH) is disordered. A CheB-type methylesterase domain is found at 183-373 (PFSTHAPRAL…PLQQIAPKLV (191 aa)). Active-site residues include Ser-197, His-225, and Asp-321.

This sequence belongs to the CheB family. Post-translationally, phosphorylated by CheA. Phosphorylation of the N-terminal regulatory domain activates the methylesterase activity.

The protein resides in the cytoplasm. The enzyme catalyses [protein]-L-glutamate 5-O-methyl ester + H2O = L-glutamyl-[protein] + methanol + H(+). It carries out the reaction L-glutaminyl-[protein] + H2O = L-glutamyl-[protein] + NH4(+). Involved in chemotaxis. Part of a chemotaxis signal transduction system that modulates chemotaxis in response to various stimuli. Catalyzes the demethylation of specific methylglutamate residues introduced into the chemoreceptors (methyl-accepting chemotaxis proteins or MCP) by CheR. Also mediates the irreversible deamidation of specific glutamine residues to glutamic acid. The polypeptide is Protein-glutamate methylesterase/protein-glutamine glutaminase (Nitrobacter hamburgensis (strain DSM 10229 / NCIMB 13809 / X14)).